A 328-amino-acid chain; its full sequence is MGAAARLSAPRALVLWAALGAAAHIGPAPDPEDWWSYKDNLQGNFVPGPPFWGLVNAAWSLCAVGKRQSPVDVELKRVLYDPFLPPLRLSTGGEKLRGTLYNTGRHVSFLPAPRPVVNVSGGPLLYSHRLSELRLLFGARDGAGSEHQINHQGFSAEVQLIHFNQELYGNFSAASRGPNGLAILSLFVNVASTSNPFLSRLLNRDTITRISYKNDAYFLQDLSLELLFPESFGFITYQGSLSTPPCSETVTWILIDRALNITSLQMHSLRLLSQNPPSQIFRSLSGNSRPLQPLAHRALRGNRDPRHPERRCRGPNYRLHVDGAPHGR.

An N-terminal signal peptide occupies residues 1 to 23 (MGAAARLSAPRALVLWAALGAAA). Residues 33–303 (DWWSYKDNLQ…LAHRALRGNR (271 aa)) enclose the Alpha-carbonic anhydrase domain. 3 N-linked (GlcNAc...) asparagine glycosylation sites follow: Asn118, Asn170, and Asn260. The interval 299–328 (LRGNRDPRHPERRCRGPNYRLHVDGAPHGR) is disordered. The span at 319–328 (LHVDGAPHGR) shows a compositional bias: basic and acidic residues.

This sequence belongs to the alpha-carbonic anhydrase family.

Its subcellular location is the secreted. Functionally, does not have a catalytic activity. The sequence is that of Carbonic anhydrase-related protein 11 (CA11) from Pongo abelii (Sumatran orangutan).